The following is a 643-amino-acid chain: Protein cueball (643 aa).

A signal peptide spans 1 to 21 (MMIWVPALIFLSACLLPRSNG). At 22–530 (TPLEWDFAVT…VCQTPFVWTS (509 aa)) the chain is on the extracellular side. N-linked (GlcNAc...) asparagine glycans are attached at residues Asn-77 and Asn-103. LDL-receptor class B repeat units follow at residues 116–163 (RNLF…DICR), 164–208 (RKLY…DQLS), and 209–254 (DRLF…TNDA). N-linked (GlcNAc...) asparagine glycosylation is present at Asn-172. Over residues 276–290 (ATTTVRPEVESSTDG) the composition is skewed to polar residues. Positions 276–303 (ATTTVRPEVESSTDGTESESKQESEPVE) are disordered. Asn-312 carries N-linked (GlcNAc...) asparagine glycosylation. EGF-like domains are found at residues 363-397 (RMDQLERDHCMNGGSYISKRDLCICPAGFKGSRCE), 398-429 (IRECHNYCVHGTCQMSDLAYPKCYCQPGFTGE), and 432-470 (EVSNCAGLCLNGGHCRLGETEKDQPSCECPANFAGERCE). 7 disulfides stabilise this stretch: Cys-372-Cys-385, Cys-387-Cys-396, Cys-401-Cys-410, Cys-405-Cys-420, Cys-436-Cys-446, Cys-440-Cys-458, and Cys-460-Cys-469. N-linked (GlcNAc...) asparagine glycosylation is found at Asn-472 and Asn-507. The chain crosses the membrane as a helical span at residues 531–551 (SVIIILVVGIVFSLLLITTII). Over 552 to 643 (HGIRRLYKPK…LIHNMEDDLY (92 aa)) the chain is Cytoplasmic.

Belongs to the cueball family.

It localises to the cell membrane. Has a role in spermatogenesis and oogenesis. This Drosophila ananassae (Fruit fly) protein is Protein cueball.